Reading from the N-terminus, the 157-residue chain is Tripartite terminase subunit 2 (157 aa).

A disordered region spans residues 1-69; sequence MSWAKQRVPF…DGEDGHALPD (69 aa). Residues 11–27 are compositionally biased toward acidic residues; it reads LDDDDGEEENDVQDDVD.

It belongs to the herpesviridae TRM2 protein family. As to quaternary structure, associates with TRM1 and TRM3 to form the tripartite terminase complex.

The protein resides in the host nucleus. Functionally, component of the molecular motor that translocates viral genomic DNA in empty capsid during DNA packaging. Forms a tripartite terminase complex together with TRM1 and TRM3 in the host cytoplasm. Once the complex reaches the host nucleus, it interacts with the capsid portal vertex. This portal forms a ring in which genomic DNA is translocated into the capsid. This is Tripartite terminase subunit 2 from Homo sapiens (Human).